The primary structure comprises 507 residues: MAEFQGYLELDRSWQHDLLYPLIFREYIYTFVHDHGLNRNRSNLLENVGYDNKSSLLIVKRLISRMYQQNHLIISANDSNQNPVFGYNKNFYSQMISEGFAVVVEIPFSLRLVSSLKGTEVVKYYNLQSIHSTFPFFEDKFPHLNYVSDVLIPYPIHLEILVQTLRYWVKDVSSLHLLRLFLHEYYSWNRFLIPNKSISIFSKSNLRFFLFLYNSHVCEYESILLFLRNQSSHLRLTSSGGFFERIYFYGKIKHPVEEVFADDFPTSLWFFQDLVIHYVRYQGKSILASKDMPLLMNKWKYYLVHLWQCHFYVWSQAGSIYINQLSKHAFGFLGYLSSMRINLSVVRSQMLENSFLMDNAMKKIDTLIPISPLIGSLAKMKFCNVVGQPLSKSTWADLSDFDIIDRFARICRNLFHYYSGSSKKKSLYRVKYILRLSCVKTLARKHKSTVRTFLKRLGSELLDEFFTEEEEVLSLIFPRTYSTLRRLYKGRIWYLDIFCINDLVNHE.

It belongs to the intron maturase 2 family. MatK subfamily.

It localises to the plastid. The protein localises to the chloroplast. In terms of biological role, usually encoded in the trnK tRNA gene intron. Probably assists in splicing its own and other chloroplast group II introns. The polypeptide is Maturase K (Humulus lupulus (European hop)).